The sequence spans 75 residues: MSKLGALLTICLLLFPITALLMDGDQPADRPAERMDYDISSEVHRLLERRHPPCCMYGRCRRYPGCSSASCCQGG.

A signal peptide spans 1 to 19 (MSKLGALLTICLLLFPITA). The propeptide occupies 20-50 (LLMDGDQPADRPAERMDYDISSEVHRLLERR). Residues P52, P53, and P64 each carry the 4-hydroxyproline modification. 3 disulfides stabilise this stretch: C54–C66, C55–C71, and C60–C72. G74 is subject to Glycine amide.

In terms of tissue distribution, expressed by the venom duct.

The protein resides in the secreted. In terms of biological role, psi-conotoxins act on postsynaptic membranes, and act as non-competitive antagonist of nicotinic acetylcholine receptors (nAChR). Is more toxic than Psi-conotoxin PIIIF. In vivo, has paralytic activity when injected intraperitoneally into goldfish. The protein is Psi-conotoxin PIIIE of Conus purpurascens (Purple cone).